The primary structure comprises 779 residues: Putative helicase V13 (779 aa).

The SF3 helicase domain occupies 477–642 (DNPKPFITSL…FVKEEELNEK (166 aa)). 504-511 (GKSNAGKS) serves as a coordination point for ATP.

The sequence is that of Putative helicase V13 from Acanthamoeba polyphaga (Amoeba).